We begin with the raw amino-acid sequence, 562 residues long: UPF0649 protein C1442.02 (562 aa).

Phosphoserine occurs at positions 285 and 286. Residues 288 to 308 (DEEIAKNADVPAEVDNNSTKA) are disordered.

The protein belongs to the UPF0649 family.

The protein resides in the cytoplasm. It localises to the nucleus. The sequence is that of UPF0649 protein C1442.02 from Schizosaccharomyces pombe (strain 972 / ATCC 24843) (Fission yeast).